Consider the following 320-residue polypeptide: uncharacterized protein (320 aa).

Transmembrane regions (helical) follow at residues 24–44, 65–85, 105–125, 132–152, 179–199, 226–246, and 253–275; these read FEFS…IFFI, FVLS…LWSL, TTSC…FIVV, SWFV…IAIL, ISLT…IYTF, MIPI…YFGY, and TSRW…MLSL.

It is found in the membrane. This is an uncharacterized protein from Caenorhabditis elegans.